Reading from the N-terminus, the 236-residue chain is Dolichol-phosphate mannosyltransferase (236 aa).

Pro9, Tyr11, Glu13, Ile40, Asp42, Asp95, Ala96, Asp97, Arg124, Val160, Arg211, and Lys217 together coordinate GDP-alpha-D-mannose. A Mg(2+)-binding site is contributed by Asp97. Mn(2+) is bound at residue Asp97.

The protein belongs to the glycosyltransferase 2 family. Component of the dolichol-phosphate mannose (DPM) synthase complex composed of dpm1, dpm2 and dpm3. Mg(2+) serves as cofactor. Mn(2+) is required as a cofactor. It depends on Ca(2+) as a cofactor.

It is found in the endoplasmic reticulum. It catalyses the reaction a di-trans,poly-cis-dolichyl phosphate + GDP-alpha-D-mannose = a di-trans,poly-cis-dolichyl beta-D-mannosyl phosphate + GDP. The protein operates within protein modification; protein glycosylation. Its function is as follows. Transfers mannose from GDP-mannose to dolichol monophosphate to form dolichol phosphate mannose (Dol-P-Man) which is the mannosyl donor in pathways leading to N-glycosylation, glycosyl phosphatidylinositol membrane anchoring, and O-mannosylation of proteins. The chain is Dolichol-phosphate mannosyltransferase from Schizosaccharomyces pombe (strain 972 / ATCC 24843) (Fission yeast).